The sequence spans 284 residues: Pantothenate synthetase (284 aa).

Position 30–37 (30–37 (MGNLHDGH)) interacts with ATP. The active-site Proton donor is the H37. Position 61 (Q61) interacts with (R)-pantoate. Residue Q61 coordinates beta-alanine. Position 149 to 152 (149 to 152 (GEKD)) interacts with ATP. Q155 contributes to the (R)-pantoate binding site. ATP is bound by residues I178 and 186 to 189 (LSSR).

This sequence belongs to the pantothenate synthetase family. As to quaternary structure, homodimer.

The protein localises to the cytoplasm. It catalyses the reaction (R)-pantoate + beta-alanine + ATP = (R)-pantothenate + AMP + diphosphate + H(+). Its pathway is cofactor biosynthesis; (R)-pantothenate biosynthesis; (R)-pantothenate from (R)-pantoate and beta-alanine: step 1/1. Functionally, catalyzes the condensation of pantoate with beta-alanine in an ATP-dependent reaction via a pantoyl-adenylate intermediate. The protein is Pantothenate synthetase of Salmonella paratyphi B (strain ATCC BAA-1250 / SPB7).